A 241-amino-acid polypeptide reads, in one-letter code: NAD(P)H-quinone oxidoreductase subunit K (241 aa).

4 residues coordinate [4Fe-4S] cluster: Cys-60, Cys-61, Cys-125, and Cys-156. The segment at 220 to 241 is disordered; sequence SSQKEKITELPEKTEITNTEKD. The span at 222 to 241 shows a compositional bias: basic and acidic residues; it reads QKEKITELPEKTEITNTEKD.

It belongs to the complex I 20 kDa subunit family. As to quaternary structure, NDH-1 can be composed of about 15 different subunits; different subcomplexes with different compositions have been identified which probably have different functions. [4Fe-4S] cluster serves as cofactor.

It is found in the cellular thylakoid membrane. The enzyme catalyses a plastoquinone + NADH + (n+1) H(+)(in) = a plastoquinol + NAD(+) + n H(+)(out). It catalyses the reaction a plastoquinone + NADPH + (n+1) H(+)(in) = a plastoquinol + NADP(+) + n H(+)(out). Its function is as follows. NDH-1 shuttles electrons from an unknown electron donor, via FMN and iron-sulfur (Fe-S) centers, to quinones in the respiratory and/or the photosynthetic chain. The immediate electron acceptor for the enzyme in this species is believed to be plastoquinone. Couples the redox reaction to proton translocation, and thus conserves the redox energy in a proton gradient. Cyanobacterial NDH-1 also plays a role in inorganic carbon-concentration. This Prochlorococcus marinus (strain MIT 9215) protein is NAD(P)H-quinone oxidoreductase subunit K.